The following is a 389-amino-acid chain: GTPase Obg (389 aa).

Residues 1 to 159 (MKFVDEAVIK…RELRLELLLL (159 aa)) form the Obg domain. One can recognise an OBG-type G domain in the interval 160 to 333 (ADVGLLGMPN…LAEKLFDFIK (174 aa)). GTP contacts are provided by residues 166–173 (GMPNAGKS), 191–195 (FTTLV), 213–216 (DIPG), 283–286 (NKTD), and 314–316 (SAA). Residues serine 173 and threonine 193 each contribute to the Mg(2+) site.

It belongs to the TRAFAC class OBG-HflX-like GTPase superfamily. OBG GTPase family. As to quaternary structure, monomer. Mg(2+) is required as a cofactor.

The protein localises to the cytoplasm. Its function is as follows. An essential GTPase which binds GTP, GDP and possibly (p)ppGpp with moderate affinity, with high nucleotide exchange rates and a fairly low GTP hydrolysis rate. Plays a role in control of the cell cycle, stress response, ribosome biogenesis and in those bacteria that undergo differentiation, in morphogenesis control. This Shewanella amazonensis (strain ATCC BAA-1098 / SB2B) protein is GTPase Obg.